We begin with the raw amino-acid sequence, 510 residues long: Maturase K (510 aa).

The protein belongs to the intron maturase 2 family. MatK subfamily.

It is found in the plastid. The protein localises to the chloroplast. Its function is as follows. Usually encoded in the trnK tRNA gene intron. Probably assists in splicing its own and other chloroplast group II introns. This chain is Maturase K, found in Grahamia bracteata.